Here is a 1025-residue protein sequence, read N- to C-terminus: Multidrug resistance protein MdtC (1025 aa).

Helical transmembrane passes span 3–23, 333–353, 360–380, 387–407, 431–451, 463–483, 528–548, 853–873, 875–895, 897–917, 953–973, and 984–1004; these read FFAL…AITL, EVEQ…FLFL, IIPA…MYLC, LSLM…IVVL, VGFT…PLLL, FAVT…TLTP, LVGV…ISIP, VILI…LYES, VHPL…LLAL, LFNA…IGIV, PIMM…LSGG, and ITIV…TPVV.

The protein belongs to the resistance-nodulation-cell division (RND) (TC 2.A.6) family. MdtC subfamily. As to quaternary structure, part of a tripartite efflux system composed of MdtA, MdtB and MdtC. MdtC forms a heteromultimer with MdtB.

The protein resides in the cell inner membrane. Its function is as follows. The MdtABC tripartite complex confers resistance against novobiocin and deoxycholate. The sequence is that of Multidrug resistance protein MdtC from Escherichia coli (strain K12 / MC4100 / BW2952).